The following is a 442-amino-acid chain: Cyclic 2,3-diphosphoglycerate synthetase (442 aa).

The protein belongs to the cyclic 2,3-diphosphoglycerate synthetase family.

It is found in the cytoplasm. The catalysed reaction is (2R)-2,3-bisphosphoglycerate + ATP + H(+) = cyclic (2R)-2,3-bisphosphoglycerate + ADP + phosphate. Functionally, catalyzes the formation of cyclic 2,3-diphosphoglycerate (cDPG) by formation of an intramolecular phosphoanhydride bond at the expense of ATP. The chain is Cyclic 2,3-diphosphoglycerate synthetase from Rubrobacter xylanophilus (strain DSM 9941 / JCM 11954 / NBRC 16129 / PRD-1).